The primary structure comprises 220 residues: Small ribosomal subunit protein eS8 (220 aa).

2 disordered regions span residues 1 to 41 (MGIS…LSSN) and 131 to 151 (AKKD…KKSN). The segment covering 8–26 (MHKRRATGGKQKAWRKKRK) has biased composition (basic residues).

Belongs to the eukaryotic ribosomal protein eS8 family.

This is Small ribosomal subunit protein eS8 (RPS8) from Oryza sativa subsp. japonica (Rice).